The sequence spans 416 residues: Kynureninase (416 aa).

Pyridoxal 5'-phosphate-binding positions include Thr97, Ser98, 129-132, Thr172, Asp201, His204, and Tyr226; that span reads FPTD. N6-(pyridoxal phosphate)lysine is present on Lys227. Positions 256 and 282 each coordinate pyridoxal 5'-phosphate.

This sequence belongs to the kynureninase family. As to quaternary structure, homodimer. Pyridoxal 5'-phosphate is required as a cofactor.

The catalysed reaction is L-kynurenine + H2O = anthranilate + L-alanine + H(+). The enzyme catalyses 3-hydroxy-L-kynurenine + H2O = 3-hydroxyanthranilate + L-alanine + H(+). Its pathway is amino-acid degradation; L-kynurenine degradation; L-alanine and anthranilate from L-kynurenine: step 1/1. The protein operates within cofactor biosynthesis; NAD(+) biosynthesis; quinolinate from L-kynurenine: step 2/3. Functionally, catalyzes the cleavage of L-kynurenine (L-Kyn) and L-3-hydroxykynurenine (L-3OHKyn) into anthranilic acid (AA) and 3-hydroxyanthranilic acid (3-OHAA), respectively. The sequence is that of Kynureninase from Pseudomonas fluorescens.